The chain runs to 188 residues: MDSSKKIIIVMFLVTFYMFSCVSSTEFEVGGENGWIVPKSKTLGDAFNQWASDNRFKVGDTLRFKYTKDSVLVVSEEEYKKCKATKPQLYSNNEDTVFKLDRPGLFYFISGVSGHCEKGQKMIVKVMETESSTESPPPSSSSSSSSSSSLPASTPKAKKSNAFKTAVQFSSSGFVVSAVLIVSVFGLV.

A signal peptide spans 1 to 24; the sequence is MDSSKKIIIVMFLVTFYMFSCVSS. The 104-residue stretch at 25 to 128 folds into the Phytocyanin domain; the sequence is TEFEVGGENG…GQKMIVKVME (104 aa). Cysteines 82 and 116 form a disulfide. Residues 127–157 are disordered; the sequence is METESSTESPPPSSSSSSSSSSSLPASTPKA. Over residues 129–155 the composition is skewed to low complexity; the sequence is TESSTESPPPSSSSSSSSSSSLPASTP. Ser-170 is lipidated: GPI-anchor amidated serine. A propeptide spans 171 to 188 (removed in mature form); that stretch reads SSGFVVSAVLIVSVFGLV.

The protein belongs to the early nodulin-like (ENODL) family. Mostly expressed in leaves and flowers, and, to a lower extent, in stems.

It is found in the cell membrane. Functionally, may act as a carbohydrate transporter. Mainly required for reproductive functions. This Arabidopsis thaliana (Mouse-ear cress) protein is Early nodulin-like protein 5.